A 377-amino-acid polypeptide reads, in one-letter code: Chaperone protein DnaJ (377 aa).

A J domain is found at 3 to 67; sequence DYYDLLGVGR…QTRARYDQFG (65 aa). The CR-type zinc-finger motif lies at 133–215; that stretch reads GQEQEIKIPH…CGGQGVRQVR (83 aa). Residues cysteine 146, cysteine 149, cysteine 163, cysteine 166, cysteine 189, cysteine 192, cysteine 203, and cysteine 206 each contribute to the Zn(2+) site. 4 CXXCXGXG motif repeats span residues 146–153, 163–170, 189–196, and 203–210; these read CDTCGGSG, CGTCGGAG, CPNCGGTG, and CNACGGQG.

The protein belongs to the DnaJ family. As to quaternary structure, homodimer. Requires Zn(2+) as cofactor.

Its subcellular location is the cytoplasm. Functionally, participates actively in the response to hyperosmotic and heat shock by preventing the aggregation of stress-denatured proteins and by disaggregating proteins, also in an autonomous, DnaK-independent fashion. Unfolded proteins bind initially to DnaJ; upon interaction with the DnaJ-bound protein, DnaK hydrolyzes its bound ATP, resulting in the formation of a stable complex. GrpE releases ADP from DnaK; ATP binding to DnaK triggers the release of the substrate protein, thus completing the reaction cycle. Several rounds of ATP-dependent interactions between DnaJ, DnaK and GrpE are required for fully efficient folding. Also involved, together with DnaK and GrpE, in the DNA replication of plasmids through activation of initiation proteins. This Parasynechococcus marenigrum (strain WH8102) protein is Chaperone protein DnaJ.